The following is a 645-amino-acid chain: Chaperone protein DnaK (645 aa).

Position 201 is a phosphothreonine; by autocatalysis (Thr-201). The span at 606 to 629 (NTNNATAGDNNTTDTGSSSNSDGS) shows a compositional bias: low complexity. The tract at residues 606–645 (NTNNATAGDNNTTDTGSSSNSDGSKVVDSDYQEIDKKDGK) is disordered. Positions 630-645 (KVVDSDYQEIDKKDGK) are enriched in basic and acidic residues.

It belongs to the heat shock protein 70 family.

In terms of biological role, acts as a chaperone. The polypeptide is Chaperone protein DnaK (Ehrlichia ruminantium (strain Welgevonden)).